Here is a 589-residue protein sequence, read N- to C-terminus: Poly(3-hydroxyalkanoate) polymerase subunit PhaC (589 aa).

The segment at 1–23 is disordered; the sequence is MATGKGAAASTQEGKSQPFKVTP. Cys-319 is a catalytic residue.

The protein belongs to the PHA/PHB synthase family. Type I PhaC subfamily. Monomer.

The protein localises to the cytoplasm. The enzyme catalyses (3R)-3-hydroxybutanoyl-CoA + [(3R)-hydroxybutanoate](n) = [(3R)-hydroxybutanoate](n+1) + CoA. Its pathway is biopolymer metabolism; poly-(R)-3-hydroxybutanoate biosynthesis. In terms of biological role, polymerizes (R)-3-hydroxybutyryl-CoA to create polyhydroxybutyrate (PHB) which consists of thousands of hydroxybutyrate molecules linked end to end. PHB serves as an intracellular energy reserve material when cells grow under conditions of nutrient limitation. This Cupriavidus necator (strain ATCC 17699 / DSM 428 / KCTC 22496 / NCIMB 10442 / H16 / Stanier 337) (Ralstonia eutropha) protein is Poly(3-hydroxyalkanoate) polymerase subunit PhaC.